We begin with the raw amino-acid sequence, 288 residues long: Diaminopimelate epimerase (288 aa).

Substrate is bound by residues N17, Q47, and N67. Residue C76 is the Proton donor of the active site. Residues 77-78, N164, N197, and 215-216 each bind substrate; these read GN and ER. C224 functions as the Proton acceptor in the catalytic mechanism. Residue 225–226 participates in substrate binding; that stretch reads GS.

It belongs to the diaminopimelate epimerase family. As to quaternary structure, homodimer.

The protein resides in the cytoplasm. It carries out the reaction (2S,6S)-2,6-diaminopimelate = meso-2,6-diaminopimelate. It functions in the pathway amino-acid biosynthesis; L-lysine biosynthesis via DAP pathway; DL-2,6-diaminopimelate from LL-2,6-diaminopimelate: step 1/1. Its function is as follows. Catalyzes the stereoinversion of LL-2,6-diaminopimelate (L,L-DAP) to meso-diaminopimelate (meso-DAP), a precursor of L-lysine and an essential component of the bacterial peptidoglycan. In Rhodopseudomonas palustris (strain BisA53), this protein is Diaminopimelate epimerase.